The following is a 247-amino-acid chain: Pleckstrin homology domain-containing family F member 2 (247 aa).

Residues 35-131 (VLIGEGVLTK…WMSHINKCVS (97 aa)) form the PH domain. The segment at 152-212 (DSEATVCMRC…VCEFCYKQLS (61 aa)) adopts an FYVE-type zinc-finger fold. Cysteine 158, cysteine 161, cysteine 175, cysteine 178, cysteine 183, cysteine 186, cysteine 204, and cysteine 207 together coordinate Zn(2+). Residues 213-247 (TGATLPPRSDSYSRQGSDFGSNNISDDDDDDDSSD) form a disordered region. Polar residues predominate over residues 222-236 (DSYSRQGSDFGSNNI). Over residues 237–247 (SDDDDDDDSSD) the composition is skewed to acidic residues.

Its subcellular location is the early endosome membrane. It is found in the endoplasmic reticulum. Its function is as follows. May play a role in early endosome fusion upstream of RAB5, hence regulating receptor trafficking and fluid-phase transport. Enhances cellular sensitivity to TNF-induced apoptosis. The sequence is that of Pleckstrin homology domain-containing family F member 2 (plekhf2) from Danio rerio (Zebrafish).